Reading from the N-terminus, the 309-residue chain is Homoserine kinase (309 aa).

Residue 91-101 (PIGSGLGSSAC) participates in ATP binding.

It belongs to the GHMP kinase family. Homoserine kinase subfamily.

It localises to the cytoplasm. The catalysed reaction is L-homoserine + ATP = O-phospho-L-homoserine + ADP + H(+). It participates in amino-acid biosynthesis; L-threonine biosynthesis; L-threonine from L-aspartate: step 4/5. Catalyzes the ATP-dependent phosphorylation of L-homoserine to L-homoserine phosphate. The chain is Homoserine kinase from Serratia proteamaculans (strain 568).